Here is a 299-residue protein sequence, read N- to C-terminus: Probable plastid-lipid-associated protein 13, chloroplastic (299 aa).

Residues 1–48 constitute a chloroplast transit peptide; that stretch reads MALIHGSVPGTSAVRLVFSTSASPSRFCLNVPVVKQGWKNSCRRRVLR. Residue alanine 2 is modified to N-acetylvaline.

This sequence belongs to the PAP/fibrillin family.

The protein resides in the plastid. It is found in the chloroplast. It localises to the plastoglobule. This is Probable plastid-lipid-associated protein 13, chloroplastic (PAP13) from Arabidopsis thaliana (Mouse-ear cress).